Here is a 557-residue protein sequence, read N- to C-terminus: Dihydroxy-acid dehydratase (557 aa).

A [2Fe-2S] cluster-binding site is contributed by C50. Mg(2+) is bound at residue D82. [2Fe-2S] cluster is bound at residue C123. Mg(2+) contacts are provided by D124 and K125. An N6-carboxylysine modification is found at K125. A [2Fe-2S] cluster-binding site is contributed by C195. E447 contacts Mg(2+). The active-site Proton acceptor is S473.

The protein belongs to the IlvD/Edd family. As to quaternary structure, homodimer. [2Fe-2S] cluster serves as cofactor. Requires Mg(2+) as cofactor.

The enzyme catalyses (2R)-2,3-dihydroxy-3-methylbutanoate = 3-methyl-2-oxobutanoate + H2O. It catalyses the reaction (2R,3R)-2,3-dihydroxy-3-methylpentanoate = (S)-3-methyl-2-oxopentanoate + H2O. It participates in amino-acid biosynthesis; L-isoleucine biosynthesis; L-isoleucine from 2-oxobutanoate: step 3/4. The protein operates within amino-acid biosynthesis; L-valine biosynthesis; L-valine from pyruvate: step 3/4. Functions in the biosynthesis of branched-chain amino acids. Catalyzes the dehydration of (2R,3R)-2,3-dihydroxy-3-methylpentanoate (2,3-dihydroxy-3-methylvalerate) into 2-oxo-3-methylpentanoate (2-oxo-3-methylvalerate) and of (2R)-2,3-dihydroxy-3-methylbutanoate (2,3-dihydroxyisovalerate) into 2-oxo-3-methylbutanoate (2-oxoisovalerate), the penultimate precursor to L-isoleucine and L-valine, respectively. The sequence is that of Dihydroxy-acid dehydratase from Nitrosomonas europaea (strain ATCC 19718 / CIP 103999 / KCTC 2705 / NBRC 14298).